A 456-amino-acid polypeptide reads, in one-letter code: Bifunctional protein GlmU (456 aa).

The interval 1–228 (MPQNTLNTVI…SHLAAGVNNK (228 aa)) is pyrophosphorylase. UDP-N-acetyl-alpha-D-glucosamine contacts are provided by residues 11–14 (LAAG), Lys25, Gln75, 80–81 (GT), 102–104 (YGD), Gly138, Glu153, Asn168, and Asn226. Asp104 contributes to the Mg(2+) binding site. Asn226 serves as a coordination point for Mg(2+). Residues 229–249 (RQLAELERIFQTEQAQELLKA) form a linker region. The interval 250 to 456 (GVTLRDPARF…GWVRPEKNKQ (207 aa)) is N-acetyltransferase. Arg332 and Lys350 together coordinate UDP-N-acetyl-alpha-D-glucosamine. His362 functions as the Proton acceptor in the catalytic mechanism. The UDP-N-acetyl-alpha-D-glucosamine site is built by Tyr365 and Asn376. Acetyl-CoA-binding positions include Ala379, 385–386 (NY), Ser404, Ala422, and Arg439.

In the N-terminal section; belongs to the N-acetylglucosamine-1-phosphate uridyltransferase family. The protein in the C-terminal section; belongs to the transferase hexapeptide repeat family. Homotrimer. Mg(2+) serves as cofactor.

It is found in the cytoplasm. It carries out the reaction alpha-D-glucosamine 1-phosphate + acetyl-CoA = N-acetyl-alpha-D-glucosamine 1-phosphate + CoA + H(+). The catalysed reaction is N-acetyl-alpha-D-glucosamine 1-phosphate + UTP + H(+) = UDP-N-acetyl-alpha-D-glucosamine + diphosphate. It functions in the pathway nucleotide-sugar biosynthesis; UDP-N-acetyl-alpha-D-glucosamine biosynthesis; N-acetyl-alpha-D-glucosamine 1-phosphate from alpha-D-glucosamine 6-phosphate (route II): step 2/2. The protein operates within nucleotide-sugar biosynthesis; UDP-N-acetyl-alpha-D-glucosamine biosynthesis; UDP-N-acetyl-alpha-D-glucosamine from N-acetyl-alpha-D-glucosamine 1-phosphate: step 1/1. It participates in bacterial outer membrane biogenesis; LPS lipid A biosynthesis. Catalyzes the last two sequential reactions in the de novo biosynthetic pathway for UDP-N-acetylglucosamine (UDP-GlcNAc). The C-terminal domain catalyzes the transfer of acetyl group from acetyl coenzyme A to glucosamine-1-phosphate (GlcN-1-P) to produce N-acetylglucosamine-1-phosphate (GlcNAc-1-P), which is converted into UDP-GlcNAc by the transfer of uridine 5-monophosphate (from uridine 5-triphosphate), a reaction catalyzed by the N-terminal domain. The chain is Bifunctional protein GlmU from Neisseria gonorrhoeae.